Here is a 687-residue protein sequence, read N- to C-terminus: Ribonuclease E (687 aa).

Residues 35-117 (GDIYLGVVEN…LTGNITLPGR (83 aa)) enclose the S1 motif domain. Mg(2+) contacts are provided by Asp-296 and Asp-339. Zn(2+) contacts are provided by Cys-397 and Cys-400. A disordered region spans residues 650 to 687 (PIKLTETMEESEVNAASTANRRRRRRSSASDSDTGEDS). The short motif at 670–678 (RRRRRRSSA) is the C4 Arg-rich motif, necessary and sufficient to confer PNPase binding on another protein element.

It belongs to the RNase E/G family. In terms of assembly, may form homodimers or higher order multimers. Interacts with polynucleotide phosphorylase (PNPase, pnp) via the C4 Arg-rich motif (residues 670-678). A homotetramer formed by a dimer of dimers. The cofactor is Mg(2+). Zn(2+) is required as a cofactor.

It localises to the cytoplasm. It catalyses the reaction Endonucleolytic cleavage of single-stranded RNA in A- and U-rich regions.. Its function is as follows. Endoribonuclease that plays a central role in rRNA and tRNA processing and mRNA decay. Has been shown to act on 9S rRNA (the precursor of 5S rRNA). The chain is Ribonuclease E from Nostoc sp. (strain PCC 7120 / SAG 25.82 / UTEX 2576).